Here is a 394-residue protein sequence, read N- to C-terminus: MVTMEELREMDCSVLKRLMNRDENGGGAGGSGSHGTLGLPSGGKCLLLDCRPFLAHSAGYILGSVNVRCNTIVRRRAKGSVSLEQILPAEEEVRARLRSGLYSAVIVYDERSPRAESLREDSTVSLVVQALRRNAERTDICLLKGGYERFSSEYPEFCSKTKALAAIPPPVPPSATEPLDLGCSSCGTPLHDQGGPVEILPFLYLGSAYHAARRDMLDALGITALLNVSSDCPNHFEGHYQYKCIPVEDNHKADISSWFMEAIEYIDAVKDCRGRVLVHCQAGISRSATICLAYLMMKKRVRLEEAFEFVKQRRSIISPNFSFMGQLLQFESQVLATSCAAEAASPSGPLRERGKTPATPTSQFVFSFPVSVGVHSAPSSLPYLHSPITTSPSC.

Val-2 is subject to N-acetylvaline. The 119-residue stretch at Ser-41–Ser-159 folds into the Rhodanese domain. One can recognise a Tyrosine-protein phosphatase domain in the interval Gly-195–Ala-336. Cys-280 functions as the Phosphocysteine intermediate in the catalytic mechanism. Phosphoserine; by MAPK is present on residues Ser-386 and Ser-391.

Belongs to the protein-tyrosine phosphatase family. Non-receptor class dual specificity subfamily. As to quaternary structure, hollow spherical complex composed of 24 subunits with pseudooctahedral symmetry, has a tetramer as the basic unit. In terms of processing, phosphorylation in the C-terminus by ERK1/2 inhibits proteasomal degradation and stabilizes the protein.

The protein resides in the nucleus. It carries out the reaction O-phospho-L-tyrosyl-[protein] + H2O = L-tyrosyl-[protein] + phosphate. It catalyses the reaction O-phospho-L-seryl-[protein] + H2O = L-seryl-[protein] + phosphate. The enzyme catalyses O-phospho-L-threonyl-[protein] + H2O = L-threonyl-[protein] + phosphate. Functionally, regulates mitogenic signal transduction by dephosphorylating both Thr and Tyr residues on MAP kinases ERK1 and ERK2. The sequence is that of Dual specificity protein phosphatase 4 (DUSP4) from Homo sapiens (Human).